Here is a 204-residue protein sequence, read N- to C-terminus: ATP-dependent Clp protease proteolytic subunit (204 aa).

The active-site Nucleophile is the Ser-102. His-127 is an active-site residue.

Belongs to the peptidase S14 family. Fourteen ClpP subunits assemble into 2 heptameric rings which stack back to back to give a disk-like structure with a central cavity, resembling the structure of eukaryotic proteasomes.

The protein resides in the cytoplasm. It carries out the reaction Hydrolysis of proteins to small peptides in the presence of ATP and magnesium. alpha-casein is the usual test substrate. In the absence of ATP, only oligopeptides shorter than five residues are hydrolyzed (such as succinyl-Leu-Tyr-|-NHMec, and Leu-Tyr-Leu-|-Tyr-Trp, in which cleavage of the -Tyr-|-Leu- and -Tyr-|-Trp bonds also occurs).. In terms of biological role, cleaves peptides in various proteins in a process that requires ATP hydrolysis. Has a chymotrypsin-like activity. Plays a major role in the degradation of misfolded proteins. This chain is ATP-dependent Clp protease proteolytic subunit, found in Neisseria meningitidis serogroup A / serotype 4A (strain DSM 15465 / Z2491).